Consider the following 465-residue polypeptide: Ribulose bisphosphate carboxylase large chain (465 aa).

Lys4 is modified (N6,N6,N6-trimethyllysine). 2 residues coordinate substrate: Asn113 and Thr163. Catalysis depends on Lys165, which acts as the Proton acceptor. Substrate is bound at residue Lys167. Mg(2+) is bound by residues Lys191, Asp193, and Glu194. An N6-carboxylysine modification is found at Lys191. His284 acts as the Proton acceptor in catalysis. 3 residues coordinate substrate: Arg285, His317, and Ser369.

The protein belongs to the RuBisCO large chain family. Type I subfamily. As to quaternary structure, heterohexadecamer of 8 large chains and 8 small chains; disulfide-linked. The disulfide link is formed within the large subunit homodimers. The cofactor is Mg(2+). Post-translationally, the disulfide bond which can form in the large chain dimeric partners within the hexadecamer appears to be associated with oxidative stress and protein turnover.

The protein resides in the plastid. It localises to the chloroplast. It carries out the reaction 2 (2R)-3-phosphoglycerate + 2 H(+) = D-ribulose 1,5-bisphosphate + CO2 + H2O. The enzyme catalyses D-ribulose 1,5-bisphosphate + O2 = 2-phosphoglycolate + (2R)-3-phosphoglycerate + 2 H(+). Functionally, ruBisCO catalyzes two reactions: the carboxylation of D-ribulose 1,5-bisphosphate, the primary event in carbon dioxide fixation, as well as the oxidative fragmentation of the pentose substrate in the photorespiration process. Both reactions occur simultaneously and in competition at the same active site. The protein is Ribulose bisphosphate carboxylase large chain of Cassia fistula (Golden shower tree).